A 599-amino-acid polypeptide reads, in one-letter code: NADH-quinone oxidoreductase subunit C/D (599 aa).

The span at 1-15 (MTDLTAQELAQPSWQ) shows a compositional bias: polar residues. The tract at residues 1 to 21 (MTDLTAQELAQPSWQTRDHQD) is disordered. The tract at residues 1–189 (MTDLTAQELA…DPFELTKQKE (189 aa)) is NADH dehydrogenase I subunit C. The interval 213-599 (DFMFLNLGPN…IDFVMSDVDR (387 aa)) is NADH dehydrogenase I subunit D.

The protein in the N-terminal section; belongs to the complex I 30 kDa subunit family. This sequence in the C-terminal section; belongs to the complex I 49 kDa subunit family. As to quaternary structure, NDH-1 is composed of 13 different subunits. Subunits NuoB, CD, E, F, and G constitute the peripheral sector of the complex.

The protein resides in the cell inner membrane. It carries out the reaction a quinone + NADH + 5 H(+)(in) = a quinol + NAD(+) + 4 H(+)(out). Its function is as follows. NDH-1 shuttles electrons from NADH, via FMN and iron-sulfur (Fe-S) centers, to quinones in the respiratory chain. The immediate electron acceptor for the enzyme in this species is believed to be ubiquinone. Couples the redox reaction to proton translocation (for every two electrons transferred, four hydrogen ions are translocated across the cytoplasmic membrane), and thus conserves the redox energy in a proton gradient. The polypeptide is NADH-quinone oxidoreductase subunit C/D (Erwinia tasmaniensis (strain DSM 17950 / CFBP 7177 / CIP 109463 / NCPPB 4357 / Et1/99)).